The primary structure comprises 253 residues: Triosephosphate isomerase (253 aa).

Position 8–10 (8–10 (NWK)) interacts with substrate. Residue His93 is the Electrophile of the active site. Glu165 functions as the Proton acceptor in the catalytic mechanism. Residues Gly171, Ser210, and 231 to 232 (GG) contribute to the substrate site.

It belongs to the triosephosphate isomerase family. In terms of assembly, homodimer.

The protein localises to the cytoplasm. It carries out the reaction D-glyceraldehyde 3-phosphate = dihydroxyacetone phosphate. Its pathway is carbohydrate biosynthesis; gluconeogenesis. The protein operates within carbohydrate degradation; glycolysis; D-glyceraldehyde 3-phosphate from glycerone phosphate: step 1/1. Its function is as follows. Involved in the gluconeogenesis. Catalyzes stereospecifically the conversion of dihydroxyacetone phosphate (DHAP) to D-glyceraldehyde-3-phosphate (G3P). This Francisella philomiragia subsp. philomiragia (strain ATCC 25017 / CCUG 19701 / FSC 153 / O#319-036) protein is Triosephosphate isomerase.